The sequence spans 698 residues: MSEQLPLLIELGTEELPVKALPGLAQAFFDGVLAGLEKRGVAVTRGDAKPLSTPRRLAVLLPGVATEQPEQRSEVLGPYLNIALDAEGKPTRALAGFAAKAGIDWTALERTSDAKGERFVHRAVTPGAQAAALLPEILREAIAAMPIPKPMRWGAHEYAFARPVQWLVLLFGDTVIPAELLGVRGDRITRGHRFMHDGDIALAAPGDYIDALRAAHVLVDADARRARIVEEVDAAARQAGGSARISDDNLEQVVNLVEWPSAVLCSFERAFLAVPQEALIETMEINQKFFPVLDDGGKLTEQFIGIANIVSKDVAEVAKGYERVIRPRFADAKFFFDEDLKQGLEAMGAGLASVTYQAKLGTVADKVARVAALAEAIAPQVGADPVQARRAAELAKNDLQSRMVNEFPELQGIAGRHYAKAAGEPSEISLAIDEAYQPRFAGDDIALSPLGKVLAIAERLDTLAGGFAAGLKPTGNKDPFALRRNALGLARTVIESGFDLDLPKLIDVGLASLPDAVKPHADRNTETVRADLYDFILDRLKGYYADKGVAATHFNAVAELTPASLYDFDRRIDAIGIFATLPEAEALAAANKRIRNILRKVEGEIPGDIDTTLLREPAEEALAEAVEAAIGDTGDALHRHDYVAVLARLARLRPQVDAFFDGVMVNADDPQLRANRLALLKKLGDRLGSVAAIEHLSS.

It belongs to the class-II aminoacyl-tRNA synthetase family. In terms of assembly, tetramer of two alpha and two beta subunits.

It is found in the cytoplasm. It carries out the reaction tRNA(Gly) + glycine + ATP = glycyl-tRNA(Gly) + AMP + diphosphate. This is Glycine--tRNA ligase beta subunit from Xanthomonas campestris pv. campestris (strain B100).